The following is a 558-amino-acid chain: Origin recognition complex subunit 2 (558 aa).

The tract at residues Thr119–Thr216 is disordered. Polar residues predominate over residues Ala136–Pro145. A compositionally biased stretch (low complexity) spans Ser169–Asn182. Polar residues predominate over residues Ala193 to Gln202.

The protein belongs to the ORC2 family. ORC is composed of six subunits.

The protein resides in the nucleus. Component of the origin recognition complex (ORC) that binds origins of replication. DNA-binding is ATP-dependent, however specific DNA sequences that define origins of replication have not been identified so far. ORC is required to assemble the pre-replication complex necessary to initiate DNA replication. This chain is Origin recognition complex subunit 2 (orc2), found in Xenopus laevis (African clawed frog).